The sequence spans 1291 residues: GRB10-interacting GYF protein 2 (1291 aa).

The residue at position 2 (Ala2) is an N-acetylalanine. 3 positions are modified to phosphoserine: Ser19, Ser26, and Ser30. Omega-N-methylarginine occurs at positions 107, 119, and 121. Residues 112–132 form a disordered region; the sequence is GTVVGAPRGRSSSRGRGRGRG. Ser140 is modified (phosphoserine). Disordered stretches follow at residues 148-196, 209-248, and 267-484; these read FGRG…RKHE, REEQ…GWRE, and RGYR…TEPD. Arg150 is subject to Omega-N-methylarginine. Basic and acidic residues predominate over residues 152 to 183; that stretch reads GGREMHRSQSWEERGDRRFEKPGRKDVGRPNF. Residues Ser161, Ser190, and Ser237 each carry the phosphoserine modification. The span at 226–248 shows a compositional bias: basic and acidic residues; that stretch reads SRRDGERWRPHSPDGPRSTGWRE. Positions 281 to 311 match the DDX6 binding motif motif; that stretch reads DDRDSLPEWCLEDAEEEMGTFDSSGAFLSLK. Over residues 290–299 the composition is skewed to acidic residues; the sequence is CLEDAEEEMG. The segment covering 313–364 has biased composition (basic and acidic residues); it reads VQKEPIPEEQEMDFRPVEEGEERSDSDSSHNEEAKEPDKTNRREGEKTDRAG. Positions 371-393 are enriched in polar residues; that stretch reads VPQTSLSSARPGTPSDHQPQEAT. A Phosphothreonine modification is found at Thr383. Residues 394 to 415 are compositionally biased toward basic and acidic residues; sequence QFERKDEPKAEQVEKAEEENRS. One can recognise a GYF domain in the interval 534-582; that stretch reads MQKWYYKDPQGEIQGPFNNQEMAEWFQAGYFTMSLLVKRACDESFQPLG. The required for GRB10-binding stretch occupies residues 548–564; sequence GPFNNQEMAEWFQAGYF. Ser594 bears the Phosphoserine mark. Disordered regions lie at residues 732 to 794, 846 to 937, 958 to 998, 1011 to 1053, and 1090 to 1118; these read KAKA…QEEA, EEAA…SNTA, ERQL…SKPA, EARQ…SVWG, and KEVG…NRQN. Residues 846 to 898 are compositionally biased toward basic and acidic residues; that stretch reads EEAAKWAREEEEAQRRLEENRLRMEEEAARLRHEEEERKRKELELQRQKDLMR. Positions 899–924 are enriched in low complexity; the sequence is QRQQQQEALRRLQQQQQQQQLAQMKL. Polar residues predominate over residues 925–937; sequence PSSSTWGQQSNTA. Basic and acidic residues predominate over residues 958–973; sequence ERQLREEQRRQQRELM. Low complexity predominate over residues 977–986; the sequence is QQQQQQQQQQ. A Phosphoserine modification is found at Ser995. Positions 1015 to 1031 are enriched in low complexity; it reads MQKQQQQQQQQQQQHQQ. Over residues 1032–1053 the composition is skewed to polar residues; it reads SNRARNSTHSNLHTSLGNSVWG. Low complexity predominate over residues 1096–1110; it reads NSTNKNKNNASLSKS. A Glycyl lysine isopeptide (Lys-Gly) (interchain with G-Cter in SUMO2) cross-link involves residue Lys1129. Disordered stretches follow at residues 1202–1223 and 1239–1263; these read AKQK…QDSV and QSNN…KMVR. Positions 1208 to 1220 are enriched in low complexity; the sequence is QQRQQQQQQQQQQ. Phosphoserine is present on Ser1276.

The protein belongs to the GIGYF family. In terms of assembly, component of the 4EHP-GYF2 complex, at least composed of EIF4E2, GIGYF2 and ZNF598. Interacts (via the 4EHP-binding motif) with EIF4E2; the interaction is direct. Interacts with ZFP36/TTP (via P-P-P-P-G repeats); the interaction is direct. Interacts with GRB10. Interacts (via DDX6 motif) with DDX6 (via RecA-like domain 2). In terms of tissue distribution, expressed in heart, liver, kidney and brain as well as in testis.

Functionally, key component of the 4EHP-GYF2 complex, a multiprotein complex that acts as a repressor of translation initiation. In the 4EHP-GYF2 complex, acts as a factor that bridges EIF4E2 to ZFP36/TTP, linking translation repression with mRNA decay. Also recruits and bridges the association of the 4EHP complex with the decapping effector protein DDX6, which is required for the ZFP36/TTP-mediated down-regulation of AU-rich mRNA. May act cooperatively with GRB10 to regulate tyrosine kinase receptor signaling, including IGF1 and insulin receptors. In association with EIF4E2, assists ribosome-associated quality control (RQC) by sequestering the mRNA cap, blocking ribosome initiation and decreasing the translational load on problematic messages. Part of a pathway that works in parallel to RQC-mediated degradation of the stalled nascent polypeptide. GIGYF2 and EIF4E2 work downstream and independently of ZNF598, which seems to work as a scaffold that can recruit them to faulty mRNA even if alternative recruitment mechanisms may exist. The protein is GRB10-interacting GYF protein 2 of Mus musculus (Mouse).